A 99-amino-acid chain; its full sequence is uncharacterized protein (99 aa).

A helical membrane pass occupies residues 74–90; it reads FLSLPLGHSYLFLFCFW.

It localises to the membrane. This is an uncharacterized protein from Saccharomyces cerevisiae (strain ATCC 204508 / S288c) (Baker's yeast).